The following is a 319-amino-acid chain: Aliphatic sulfonates import ATP-binding protein SsuB 1 (319 aa).

Positions 63 to 282 constitute an ABC transporter domain; the sequence is VTLSGVSKRF…ARASAAFAAL (220 aa). Residue 95 to 102 participates in ATP binding; sequence GRSGCGKS.

Belongs to the ABC transporter superfamily. Aliphatic sulfonates importer (TC 3.A.1.17.2) family. As to quaternary structure, the complex is composed of two ATP-binding proteins (SsuB), two transmembrane proteins (SsuC) and a solute-binding protein (SsuA).

It localises to the cell inner membrane. The enzyme catalyses ATP + H2O + aliphatic sulfonate-[sulfonate-binding protein]Side 1 = ADP + phosphate + aliphatic sulfonateSide 2 + [sulfonate-binding protein]Side 1.. Its function is as follows. Part of the ABC transporter complex SsuABC involved in aliphatic sulfonates import. Responsible for energy coupling to the transport system. In Burkholderia lata (strain ATCC 17760 / DSM 23089 / LMG 22485 / NCIMB 9086 / R18194 / 383), this protein is Aliphatic sulfonates import ATP-binding protein SsuB 1.